A 471-amino-acid chain; its full sequence is MAAMETETAPLTLESLPTDPLLLILSFLDYRDLINCCYVSRRLSQLSSHDPLWRRHCKKYWLISEEEKTQKNQCWKSLFIDTYSDVGRYIDHYAAIKKAWDDLKKYLEPRCPRMVLSLKEGAREEDLDAVEAQIGCKLPDDYRCSYRIHNGQKLVVPGLLGSMALSNHYRSEDLLDVDTAAGGFQQRQGLKYCLPLTFCIHTGLSQYIAVEAAEGRNKNEVFYQCPDQMARNPAAIDMFIIGATFTDWFTSYVKNVVSGGFPIIRDQIFRYVHDPECVATTGDITVSVSTSFLPELSSVHPPHYFFTYRIRIEMSKDALPEKACQLDSRYWRITNAKGDVEEVQGPGVVGEFPIISPGRVYEYTSCTTFSTTSGYMEGYYTFHFLYFKDKIFNVAIPRFHMACPTFRVSIARLEMGPDEYEEMEEEEEEEEEEDEDDDSADMDESDEDDEEERRRRVFDVPIRRRRCSRLF.

The region spanning Pro-10 to His-56 is the F-box domain. The region spanning Val-278–Val-408 is the ApaG domain. The span at Glu-419–Glu-451 shows a compositional bias: acidic residues. A disordered region spans residues Glu-419–Arg-455.

In terms of assembly, part of a SCF (SKP1-cullin-F-box) protein ligase complex SCF(FBXO3) consisting of FBXO3, SKP1, CUL1 and RBX1. Interacts with PML, interaction is direct and takes place either alone or within the SCF complex. As to quaternary structure, (Microbial infection) Interacts (via ApaG domain) with Rift valley fever virus NSs helical filament; this interaction forms a filamentous E3 which mediates degradation of TFIIH complex through interaction with GT2H1.

It localises to the nucleus. It functions in the pathway protein modification; protein ubiquitination. Functionally, substrate recognition component of the SCF (SKP1-CUL1-F-box protein)-type E3 ubiquitin ligase complex, SCF(FBXO3), which mediates the ubiquitination and subsequent proteasomal degradation of target proteins. Mediates the ubiquitination of HIPK2 and probably that of EP300, leading to rapid degradation by the proteasome. In the presence of PML, HIPK2 ubiquitination still occurs, but degradation is prevented. PML, HIPK2 and FBXO3 may act synergically to activate p53/TP53-dependent transactivation. The SCF(FBXO3) also acts as a regulator of inflammation by mediating ubiquitination and degradation of FBXL2 in response to lipopolysaccharide (LPS). The SCF(FBXO3) complex specifically recognizes FBXL2 phosphorylated at 'Thr-404' and promotes its ubiquitination. (Microbial infection) Associates with the Rift valley fever virus NSs to form a remodeled E3 ligase that triggers efficient proteasomal degradation of targeted proteins. The filamentous E3 ligase targets the TFIIH complex leading to robust inhibition of antiviral immunity and enhances viral pathogenesis. This Homo sapiens (Human) protein is F-box only protein 3.